The sequence spans 116 residues: MSVESFTPTAIQFSQGAASKVKSLVDEEGNPRLKLRVFVTGGGCSGFQYGFTFDEDVADDDTVIEREGVSLVVDPMSYQYLAGAEVDYQEGLEGSRFVIKNPNATTTCGCGQSFSI.

Residues C44, C108, and C110 each coordinate iron-sulfur cluster.

The protein belongs to the HesB/IscA family. Homodimer. The cofactor is iron-sulfur cluster.

In terms of biological role, required for insertion of 4Fe-4S clusters for at least IspG. This is Iron-sulfur cluster insertion protein ErpA from Stutzerimonas stutzeri (strain A1501) (Pseudomonas stutzeri).